A 192-amino-acid chain; its full sequence is MYKTNIVFNVLALALFSIFFASCTDMKDESDRGAHSERGALWFGPRLGKRSMKPSTEDNRQTFLRLLEAADALKFYYDQLPYERQADEPETKVTKKIIFTPKLGRSVAKPQTHESLEFIPRLGRRLSEDMPATPADQEMYQPDPEEMESRTRYFSPRLGRTMSFSPRLGRELSYDYPTKYRVARSVNKTMDN.

The signal sequence occupies residues 1–23 (MYKTNIVFNVLALALFSIFFASC). Leu-47 is modified (leucine amide). Residues 51–94 (SMKPSTEDNRQTFLRLLEAADALKFYYDQLPYERQADEPETKVT) constitute a propeptide that is removed on maturation. Leucine amide occurs at positions 103, 122, 158, and 168. A propeptide spanning residues 171 to 192 (ELSYDYPTKYRVARSVNKTMDN) is cleaved from the precursor.

This sequence belongs to the pyrokinin family. In terms of tissue distribution, expression is restricted to the subesophageal ganglion.

It is found in the secreted. In terms of biological role, a hormone that controls sex pheromone production in females and pheromone responsiveness in male. Also mediates visceral muscle contractile activity (myotropic activity). Identical to MRCH which is implicated in the formation of both melanin in the cuticle and ommochrome in the epidermis of armyworm species. Diapause hormone (DH) is responsible for induction of embryonic diapause. Functionally, the three SGNPS are far less active than DH in inducing diapause eggs. Beta-SGNP expressed higher pban activity than PBAN-I, but alpha- and gamma-SGNP were far less active in pheromonotropic activity. In Bombyx mori (Silk moth), this protein is PBAN-type neuropeptides.